Here is a 639-residue protein sequence, read N- to C-terminus: Centromere protein T (639 aa).

Disordered stretches follow at residues 1–64, 266–294, 307–451, 458–477, and 494–534; these read MDGR…RPNA, QLSD…GLVS, SEKD…ERGT, AAEE…ESEE, and QPVL…TREP. The segment covering 12 to 23 has biased composition (low complexity); sequence RAAPTPRVAVRS. Positions 80-500 are flexible stalk domain; it reads IIQNQPQVSP…YRPQPVLSPP (421 aa). The span at 267–281 shows a compositional bias: polar residues; sequence LSDSKTSAQRSNTSY. 4 stretches are compositionally biased toward basic and acidic residues: residues 307-319, 329-338, 356-371, and 432-449; these read SEKD…EHVD, QGEEEQDHSQ, TEHH…SEKK, and PGAK…EIER. Positions 458–469 are enriched in acidic residues; it reads AAEEEATDDESD.

It belongs to the CENP-T/CNN1 family. As to quaternary structure, component of the CENPA-CAD complex, composed of CENPI, CENPK, CENPL, CENPO, CENPP, CENPQ, CENPR and CENPS. The CENPA-CAD complex is probably recruited on centromeres by the CENPA-NAC complex, at least composed of CENPA, CENPC, CENPH, CENPM, CENPN, CENPT and CENPU. Identified in a centromeric complex containing histones H2A, H2B, H3 and H4, and at least CENPA, CENPB, CENPC, CENPT, CENPN, HJURP, SUPT16H, SSRP1 and RSF1. Interacts (via N-terminus) with the NDC80 complex. Heterodimer with CENPW; this dimer coassembles with CENPS-CENPX heterodimers at centromeres to form the tetrameric CENP-T-W-S-X complex.

It is found in the nucleus. The protein localises to the chromosome. Its subcellular location is the centromere. The protein resides in the kinetochore. In terms of biological role, component of the CENPA-NAC (nucleosome-associated) complex, a complex that plays a central role in assembly of kinetochore proteins, mitotic progression and chromosome segregation. The CENPA-NAC complex recruits the CENPA-CAD (nucleosome distal) complex and may be involved in incorporation of newly synthesized CENPA into centromeres. Part of a nucleosome-associated complex that binds specifically to histone H3-containing nucleosomes at the centromere, as opposed to nucleosomes containing CENPA. Component of the heterotetrameric CENP-T-W-S-X complex that binds and supercoils DNA, and plays an important role in kinetochore assembly. CENPT has a fundamental role in kinetochore assembly and function. It is one of the inner kinetochore proteins, with most further proteins binding downstream. Required for normal chromosome organization and normal progress through mitosis. The protein is Centromere protein T (CENPT) of Gallus gallus (Chicken).